The chain runs to 224 residues: Urease accessory protein UreF (224 aa).

It belongs to the UreF family. In terms of assembly, ureD, UreF and UreG form a complex that acts as a GTP-hydrolysis-dependent molecular chaperone, activating the urease apoprotein by helping to assemble the nickel containing metallocenter of UreC. The UreE protein probably delivers the nickel.

The protein resides in the cytoplasm. Its function is as follows. Required for maturation of urease via the functional incorporation of the urease nickel metallocenter. In Citrobacter koseri (strain ATCC BAA-895 / CDC 4225-83 / SGSC4696), this protein is Urease accessory protein UreF.